Consider the following 208-residue polypeptide: Large ribosomal subunit protein bL25 (208 aa).

Belongs to the bacterial ribosomal protein bL25 family. CTC subfamily. Part of the 50S ribosomal subunit; part of the 5S rRNA/L5/L18/L25 subcomplex. Contacts the 5S rRNA. Binds to the 5S rRNA independently of L5 and L18.

Functionally, this is one of the proteins that binds to the 5S RNA in the ribosome where it forms part of the central protuberance. This chain is Large ribosomal subunit protein bL25, found in Acidovorax ebreus (strain TPSY) (Diaphorobacter sp. (strain TPSY)).